Here is a 350-residue protein sequence, read N- to C-terminus: Deoxyribonuclease-2-alpha (350 aa).

The N-terminal stretch at 1–19 is a signal peptide; it reads MAAPSSLLLAALLWVPAEA. Cysteine 22 and cysteine 162 form a disulfide bridge. N-linked (GlcNAc...) asparagine glycosylation is found at asparagine 89, asparagine 215, asparagine 269, and asparagine 293. Intrachain disulfides connect cysteine 270–cysteine 350 and cysteine 311–cysteine 330. Residue histidine 298 is part of the active site.

The protein belongs to the DNase II family. Ubiquitous.

Its subcellular location is the lysosome. It carries out the reaction Endonucleolytic cleavage to nucleoside 3'-phosphates and 3'-phosphooligonucleotide end-products.. Hydrolyzes DNA under acidic conditions with a preference for double-stranded DNA. Plays a major role in the clearance of nucleic acids generated through apoptosis, hence preventing autoinflammation. Necessary for proper fetal development and for definitive erythropoiesis in fetal liver and bone marrow, where it degrades nuclear DNA expelled from erythroid precursor cells. This is Deoxyribonuclease-2-alpha (Dnase2) from Rattus norvegicus (Rat).